The following is a 506-amino-acid chain: UBX domain-containing protein 4 (506 aa).

The interaction with UBQLN1 stretch occupies residues methionine 1–glutamate 199. At methionine 1 to threonine 411 the chain is on the cytoplasmic side. Composition is skewed to polar residues over residues serine 114–alanine 136 and serine 177–arginine 189. The disordered stretch occupies residues serine 114–aspartate 193. In terms of domain architecture, UBX spans aspartate 313–leucine 391. Residues leucine 412–phenylalanine 432 lie within the membrane without spanning it. At serine 433–methionine 506 the chain is on the cytoplasmic side. The interval proline 437–methionine 506 is disordered. Positions alanine 444–serine 456 are enriched in low complexity. Over residues lysine 457 to aspartate 489 the composition is skewed to basic and acidic residues. The residue at position 487 (threonine 487) is a Phosphothreonine. Residues asparagine 496–methionine 506 are compositionally biased toward polar residues.

As to quaternary structure, directly interacts with VCP. Interacts with UBQLN1. Forms a complex with VCP and UBQLN1.

The protein resides in the endoplasmic reticulum membrane. It localises to the nucleus envelope. In terms of biological role, involved in endoplasmic reticulum-associated protein degradation (ERAD). Acts as a platform to recruit both UBQLN1 and VCP to the ER during ERAD. The protein is UBX domain-containing protein 4 (Ubxn4) of Rattus norvegicus (Rat).